We begin with the raw amino-acid sequence, 222 residues long: Pyridoxal phosphate homeostasis protein (222 aa).

K35 is modified (N6-(pyridoxal phosphate)lysine).

The protein belongs to the pyridoxal phosphate-binding protein YggS/PROSC family.

In terms of biological role, pyridoxal 5'-phosphate (PLP)-binding protein, which is involved in PLP homeostasis. In Helicobacter pylori (strain J99 / ATCC 700824) (Campylobacter pylori J99), this protein is Pyridoxal phosphate homeostasis protein.